The sequence spans 719 residues: Phosphoribosylformylglycinamidine synthase subunit PurL (719 aa).

Residue H47 is part of the active site. The ATP site is built by Y50 and K89. E91 contributes to the Mg(2+) binding site. Residues 92 to 95 (SHNH) and R114 each bind substrate. H93 serves as the catalytic Proton acceptor. D115 is a Mg(2+) binding site. Q238 contributes to the substrate binding site. D266 lines the Mg(2+) pocket. 310 to 312 (ESQ) is a binding site for substrate. ATP-binding residues include D488 and G525. N526 lines the Mg(2+) pocket. A substrate-binding site is contributed by S528.

This sequence belongs to the FGAMS family. As to quaternary structure, monomer. Part of the FGAM synthase complex composed of 1 PurL, 1 PurQ and 2 PurS subunits.

It is found in the cytoplasm. The enzyme catalyses N(2)-formyl-N(1)-(5-phospho-beta-D-ribosyl)glycinamide + L-glutamine + ATP + H2O = 2-formamido-N(1)-(5-O-phospho-beta-D-ribosyl)acetamidine + L-glutamate + ADP + phosphate + H(+). It functions in the pathway purine metabolism; IMP biosynthesis via de novo pathway; 5-amino-1-(5-phospho-D-ribosyl)imidazole from N(2)-formyl-N(1)-(5-phospho-D-ribosyl)glycinamide: step 1/2. Part of the phosphoribosylformylglycinamidine synthase complex involved in the purines biosynthetic pathway. Catalyzes the ATP-dependent conversion of formylglycinamide ribonucleotide (FGAR) and glutamine to yield formylglycinamidine ribonucleotide (FGAM) and glutamate. The FGAM synthase complex is composed of three subunits. PurQ produces an ammonia molecule by converting glutamine to glutamate. PurL transfers the ammonia molecule to FGAR to form FGAM in an ATP-dependent manner. PurS interacts with PurQ and PurL and is thought to assist in the transfer of the ammonia molecule from PurQ to PurL. The protein is Phosphoribosylformylglycinamidine synthase subunit PurL of Cereibacter sphaeroides (strain ATCC 17025 / ATH 2.4.3) (Rhodobacter sphaeroides).